Reading from the N-terminus, the 48-residue chain is Cytochrome b559 subunit beta (48 aa).

The chain crosses the membrane as a helical span at residues 23 to 39 (WLAVHALAIPSVFFLGA). Position 27 (histidine 27) interacts with heme.

This sequence belongs to the PsbE/PsbF family. In terms of assembly, heterodimer of an alpha subunit and a beta subunit. PSII is composed of 1 copy each of membrane proteins PsbA, PsbB, PsbC, PsbD, PsbE, PsbF, PsbH, PsbI, PsbJ, PsbK, PsbL, PsbM, PsbT, PsbX, PsbY, Psb30/Ycf12, peripheral proteins PsbO, CyanoQ (PsbQ), PsbU, PsbV and a large number of cofactors. It forms dimeric complexes. Heme b serves as cofactor.

Its subcellular location is the cellular thylakoid membrane. Functionally, this b-type cytochrome is tightly associated with the reaction center of photosystem II (PSII). PSII is a light-driven water:plastoquinone oxidoreductase that uses light energy to abstract electrons from H(2)O, generating O(2) and a proton gradient subsequently used for ATP formation. It consists of a core antenna complex that captures photons, and an electron transfer chain that converts photonic excitation into a charge separation. The protein is Cytochrome b559 subunit beta of Prochlorococcus marinus (strain MIT 9515).